The chain runs to 293 residues: AKT-interacting protein (293 aa).

Polar residues predominate over residues 1-11 (MNPFWSMSTNA). Positions 1–44 (MNPFWSMSTNAGRKRSDGEEQSGSGEQRASPARPPFGKKQLPSI) are disordered. Residues 75 to 223 (YLEYSLLAEF…VVDSVKLCNS (149 aa)) enclose the UBC core domain. Residues 260-293 (RPEDFNKGLPVSGLSWVKPGSTQPFSKEDNPLQT) form a disordered region.

The protein belongs to the ubiquitin-conjugating enzyme family. FTS subfamily.

The protein resides in the cytoplasm. The protein localises to the cell membrane. May function to promote vesicle trafficking and/or fusion. May also regulate apoptosis. In Danio rerio (Zebrafish), this protein is AKT-interacting protein (aktip).